The sequence spans 400 residues: Hyaluronidase (400 aa).

The signal sequence occupies residues 1-19 (MQTILVLTTFLSAWFLAVG). 5 disulfides stabilise this stretch: cysteine 31–cysteine 319, cysteine 196–cysteine 209, cysteine 344–cysteine 355, cysteine 349–cysteine 384, and cysteine 386–cysteine 395. The Proton donor role is filled by glutamate 120. N-linked (GlcNAc...) asparagine glycans are attached at residues asparagine 129 and asparagine 166. Asparagine 243 and asparagine 275 each carry an N-linked (GlcNAc...) asparagine glycan. Positions 340–396 (NVARCSKQACSGRGRCTWPKDTSVIAWKFLVEKEDYDFYLGDIECKCVEGYEGRYCE) constitute an EGF-like domain.

This sequence belongs to the glycosyl hydrolase 56 family. In terms of assembly, monomer. Expressed by the venom gland.

It localises to the secreted. The enzyme catalyses Random hydrolysis of (1-&gt;4)-linkages between N-acetyl-beta-D-glucosamine and D-glucuronate residues in hyaluronate.. Its function is as follows. Spider venom endo-hyaluronidase that is able to degrade purified hyaluronic acid (HA) and chondroitin sulfate (CS). Has no activity on dermatan sulfate (DS) and heparan sulfate (HS). Also increases the dermonecrotic effect of the dermonecrotic toxin (AC P0CE80), when injected in rabbit skin, supporting the hypothesis that venom hyaluronidases are spreading factors. The sequence is that of Hyaluronidase from Loxosceles intermedia (Brown spider).